The sequence spans 127 residues: Ribonuclease P protein component (127 aa).

Belongs to the RnpA family. In terms of assembly, consists of a catalytic RNA component (M1 or rnpB) and a protein subunit.

The enzyme catalyses Endonucleolytic cleavage of RNA, removing 5'-extranucleotides from tRNA precursor.. Functionally, RNaseP catalyzes the removal of the 5'-leader sequence from pre-tRNA to produce the mature 5'-terminus. It can also cleave other RNA substrates such as 4.5S RNA. The protein component plays an auxiliary but essential role in vivo by binding to the 5'-leader sequence and broadening the substrate specificity of the ribozyme. This chain is Ribonuclease P protein component, found in Corynebacterium urealyticum (strain ATCC 43042 / DSM 7109).